The primary structure comprises 1513 residues: DNA polymerase alpha catalytic subunit (1513 aa).

Residues Ser235–Asp254 form a disordered region. Residues Cys1344, Cys1347, Cys1370, Cys1373, Cys1404, Cys1409, Cys1422, and Cys1427 each coordinate Zn(2+). The CysA-type zinc-finger motif lies at Cys1344–Cys1373. A CysB motif motif is present at residues Cys1404 to Cys1427.

It belongs to the DNA polymerase type-B family.

Its subcellular location is the nucleus. The enzyme catalyses DNA(n) + a 2'-deoxyribonucleoside 5'-triphosphate = DNA(n+1) + diphosphate. Its function is as follows. Polymerase alpha in a complex with DNA primase is a replicative polymerase. This chain is DNA polymerase alpha catalytic subunit, found in Oxytricha trifallax (Sterkiella histriomuscorum).